The sequence spans 402 residues: CCA-adding enzyme (402 aa).

ATP-binding residues include glycine 32 and arginine 35. CTP-binding residues include glycine 32 and arginine 35. The Mg(2+) site is built by aspartate 45 and aspartate 47. Residues arginine 116, aspartate 159, arginine 162, arginine 165, and arginine 168 each coordinate ATP. 5 residues coordinate CTP: arginine 116, aspartate 159, arginine 162, arginine 165, and arginine 168.

It belongs to the tRNA nucleotidyltransferase/poly(A) polymerase family. Bacterial CCA-adding enzyme type 3 subfamily. In terms of assembly, homodimer. The cofactor is Mg(2+).

It catalyses the reaction a tRNA precursor + 2 CTP + ATP = a tRNA with a 3' CCA end + 3 diphosphate. It carries out the reaction a tRNA with a 3' CCA end + 2 CTP + ATP = a tRNA with a 3' CCACCA end + 3 diphosphate. Catalyzes the addition and repair of the essential 3'-terminal CCA sequence in tRNAs without using a nucleic acid template. Adds these three nucleotides in the order of C, C, and A to the tRNA nucleotide-73, using CTP and ATP as substrates and producing inorganic pyrophosphate. tRNA 3'-terminal CCA addition is required both for tRNA processing and repair. Also involved in tRNA surveillance by mediating tandem CCA addition to generate a CCACCA at the 3' terminus of unstable tRNAs. While stable tRNAs receive only 3'-terminal CCA, unstable tRNAs are marked with CCACCA and rapidly degraded. The chain is CCA-adding enzyme from Streptococcus pyogenes serotype M1.